The primary structure comprises 211 residues: Urease accessory protein UreG (211 aa).

11–18 contributes to the GTP binding site; that stretch reads GPVGSGKT.

It belongs to the SIMIBI class G3E GTPase family. UreG subfamily. In terms of assembly, homodimer. UreD, UreF and UreG form a complex that acts as a GTP-hydrolysis-dependent molecular chaperone, activating the urease apoprotein by helping to assemble the nickel containing metallocenter of UreC. The UreE protein probably delivers the nickel.

Its subcellular location is the cytoplasm. Its function is as follows. Facilitates the functional incorporation of the urease nickel metallocenter. This process requires GTP hydrolysis, probably effectuated by UreG. The protein is Urease accessory protein UreG of Laribacter hongkongensis (strain HLHK9).